The following is an 81-amino-acid chain: Mipartoxin-2 (81 aa).

The first 21 residues, 1–21 (MKTLLLTLVVVTIVCLDLGNS), serve as a signal peptide directing secretion. Intrachain disulfides connect Cys24–Cys42, Cys35–Cys61, Cys65–Cys73, and Cys74–Cys79.

It belongs to the three-finger toxin family. Short-chain subfamily. Expressed by the venom gland.

It localises to the secreted. In terms of biological role, snake venom neurotoxin that blocks neuromuscular transmission, presenting a postsynaptic action through the nicotinic acetylcholine receptor (nAChR). Has no cytotoxic activity. In Micrurus mipartitus (Red-tailed coral snake), this protein is Mipartoxin-2.